The following is a 243-amino-acid chain: Carboxy-S-adenosyl-L-methionine synthase (243 aa).

S-adenosyl-L-methionine contacts are provided by residues Tyr-35, 68–70 (GCS), 92–93 (DN), and Arg-199.

Belongs to the class I-like SAM-binding methyltransferase superfamily. Cx-SAM synthase family. In terms of assembly, homodimer.

The catalysed reaction is prephenate + S-adenosyl-L-methionine = carboxy-S-adenosyl-L-methionine + 3-phenylpyruvate + H2O. Its function is as follows. Catalyzes the conversion of S-adenosyl-L-methionine (SAM) to carboxy-S-adenosyl-L-methionine (Cx-SAM). This Helicobacter pylori (strain ATCC 700392 / 26695) (Campylobacter pylori) protein is Carboxy-S-adenosyl-L-methionine synthase.